A 54-amino-acid chain; its full sequence is Ovomucoid (54 aa).

One can recognise a Kazal-like domain in the interval 4–54 (VDCSGYPQSACPQDYVPFCGSDNKTYSNKCNFCNAVADSNGTLTLSHFGKC). Intrachain disulfides connect Cys-6/Cys-36, Cys-14/Cys-33, and Cys-22/Cys-54. Asn-43 carries an N-linked (GlcNAc...) asparagine glycan.

It localises to the secreted. The protein is Ovomucoid of Gallirallus australis (Weka).